We begin with the raw amino-acid sequence, 124 residues long: Small ribosomal subunit protein uS12 (124 aa).

The disordered stretch occupies residues 1–28; it reads MPTIQQLIRTERQSSKAKTKSPALKSCP. Aspartate 89 is subject to 3-methylthioaspartic acid. Residues 104 to 124 form a disordered region; that stretch reads TAGVKDRRQSRSKYGAKTPKE.

This sequence belongs to the universal ribosomal protein uS12 family. In terms of assembly, part of the 30S ribosomal subunit. Contacts proteins S8 and S17. May interact with IF1 in the 30S initiation complex.

With S4 and S5 plays an important role in translational accuracy. Functionally, interacts with and stabilizes bases of the 16S rRNA that are involved in tRNA selection in the A site and with the mRNA backbone. Located at the interface of the 30S and 50S subunits, it traverses the body of the 30S subunit contacting proteins on the other side and probably holding the rRNA structure together. The combined cluster of proteins S8, S12 and S17 appears to hold together the shoulder and platform of the 30S subunit. The chain is Small ribosomal subunit protein uS12 from Synechococcus sp. (strain WH7803).